We begin with the raw amino-acid sequence, 510 residues long: Hyaluronidase PH-20 (510 aa).

The signal sequence occupies residues 1–35 (MGVLKFKHIFFRSFVKSSGVSQIVFTFLLIPCCLT). Cystine bridges form between Cys60–Cys351 and Cys224–Cys238. Asn82 carries N-linked (GlcNAc...) asparagine glycosylation. The Proton donor role is filled by Glu148. Residues Asn166, Asn235, Asn254, and Asn368 are each glycosylated (N-linked (GlcNAc...) asparagine). Cystine bridges form between Cys376-Cys387, Cys381-Cys435, and Cys437-Cys464. N-linked (GlcNAc...) asparagine glycans are attached at residues Asn393, Asn440, and Asn484. Residue Ser491 is the site of GPI-anchor amidated serine attachment. A propeptide spans 492-510 (TTMFIVNILFLIISSVASL) (removed in mature form).

Belongs to the glycosyl hydrolase 56 family. As to expression, testis.

The protein resides in the cell membrane. It carries out the reaction Random hydrolysis of (1-&gt;4)-linkages between N-acetyl-beta-D-glucosamine and D-glucuronate residues in hyaluronate.. In terms of biological role, involved in sperm-egg adhesion. Upon fertilization sperm must first penetrate a layer of cumulus cells that surrounds the egg before reaching the zona pellucida. The cumulus cells are embedded in a matrix containing hyaluronic acid which is formed prior to ovulation. This protein aids in penetrating the layer of cumulus cells by digesting hyaluronic acid. This is Hyaluronidase PH-20 (SPAM1) from Macaca fascicularis (Crab-eating macaque).